The chain runs to 542 residues: Chaperonin GroEL 3 (542 aa).

ATP-binding positions include 30–33, lysine 51, 87–91, glycine 415, and aspartate 494; these read TLGP and DGTTT. The disordered stretch occupies residues 523-542; the sequence is KPKKKEPPMPAMPSDMGDYD.

Belongs to the chaperonin (HSP60) family. In terms of assembly, forms a cylinder of 14 subunits composed of two heptameric rings stacked back-to-back. Interacts with the co-chaperonin GroES.

The protein resides in the cytoplasm. The catalysed reaction is ATP + H2O + a folded polypeptide = ADP + phosphate + an unfolded polypeptide.. Its function is as follows. Together with its co-chaperonin GroES, plays an essential role in assisting protein folding. The GroEL-GroES system forms a nano-cage that allows encapsulation of the non-native substrate proteins and provides a physical environment optimized to promote and accelerate protein folding. The polypeptide is Chaperonin GroEL 3 (Syntrophus aciditrophicus (strain SB)).